A 297-amino-acid polypeptide reads, in one-letter code: UDP-N-acetylenolpyruvoylglucosamine reductase (297 aa).

The FAD-binding PCMH-type domain occupies 24-189 (KVGGNAEIFF…LKAIFKVNKG (166 aa)). Arg-169 is a catalytic residue. Ser-218 (proton donor) is an active-site residue. Glu-289 is a catalytic residue.

The protein belongs to the MurB family. FAD is required as a cofactor.

It is found in the cytoplasm. It carries out the reaction UDP-N-acetyl-alpha-D-muramate + NADP(+) = UDP-N-acetyl-3-O-(1-carboxyvinyl)-alpha-D-glucosamine + NADPH + H(+). The protein operates within cell wall biogenesis; peptidoglycan biosynthesis. In terms of biological role, cell wall formation. This chain is UDP-N-acetylenolpyruvoylglucosamine reductase, found in Rickettsia canadensis (strain McKiel).